The primary structure comprises 162 residues: tRNA-specific adenosine deaminase (162 aa).

The 113-residue stretch at 3–115 (DSDKYFMKCA…KNLQKYICCK (113 aa)) folds into the CMP/dCMP-type deaminase domain. His54 provides a ligand contact to Zn(2+). Glu56 (proton donor) is an active-site residue. Zn(2+)-binding residues include Cys84 and Cys87.

Belongs to the cytidine and deoxycytidylate deaminase family. As to quaternary structure, homodimer. Zn(2+) is required as a cofactor.

The catalysed reaction is adenosine(34) in tRNA + H2O + H(+) = inosine(34) in tRNA + NH4(+). Catalyzes the deamination of adenosine to inosine at the wobble position 34 of tRNA(Arg2). The sequence is that of tRNA-specific adenosine deaminase from Buchnera aphidicola subsp. Baizongia pistaciae (strain Bp).